A 233-amino-acid chain; its full sequence is MQIIRVANAEEGGKKAFELIKEGMNNGAKVLGLATGSTPETLYKEMTASDVDFTEMTSVNLDEYVGLGGEDEQSYRYFMNKHLFDKKPFKETFVPNGKAEDLDAASAEYEKIIDAHPVDIQILGIGQNGHIGFNEPGTPLDSLTHVVELTESTINANKRYFDKVEDVPTRAVSMGIGSIMKGKKMILMAYGEAKAEAIKGMIDGPVTTDMPASALQNHQDVVVIIDDAAASKL.

D62 functions as the Proton acceptor; for enolization step in the catalytic mechanism. Catalysis depends on N128, which acts as the For ring-opening step. The active-site Proton acceptor; for ring-opening step is the H130. Catalysis depends on E135, which acts as the For ring-opening step.

This sequence belongs to the glucosamine/galactosamine-6-phosphate isomerase family. NagB subfamily.

The enzyme catalyses alpha-D-glucosamine 6-phosphate + H2O = beta-D-fructose 6-phosphate + NH4(+). The protein operates within amino-sugar metabolism; N-acetylneuraminate degradation; D-fructose 6-phosphate from N-acetylneuraminate: step 5/5. Its function is as follows. Catalyzes the reversible isomerization-deamination of glucosamine 6-phosphate (GlcN6P) to form fructose 6-phosphate (Fru6P) and ammonium ion. The sequence is that of Glucosamine-6-phosphate deaminase from Enterococcus faecalis (strain ATCC 700802 / V583).